The sequence spans 331 residues: Nucleoporin Nup35 (331 aa).

Disordered stretches follow at residues 1–63 and 79–110; these read MEPM…HELN and AHTAVGANSSTTAHGQTHSHHQTGPPTQGLFD. Polar residues-rich tracts occupy residues 8–20, 35–56, and 84–104; these read SPVNSPGSNQTQY, HKNTLSPKTGRSNISFATSPGG, and GANSSTTAHGQTHSHHQTGPP. The RRM Nup35-type domain occupies 187-268; sequence RLSDFWVTIF…SRCTDRSVID (82 aa).

It belongs to the Nup35 family. Interacts with Nup154.

Its subcellular location is the nucleus. The protein resides in the nuclear pore complex. In terms of biological role, functions as a component of the nuclear pore complex (NPC). May have a role in the organization of the inner nuclear membrane proteins at the nuclear envelope together with Nup154. This Drosophila melanogaster (Fruit fly) protein is Nucleoporin Nup35.